Here is a 305-residue protein sequence, read N- to C-terminus: Axin interactor, dorsalization-associated protein A (305 aa).

Residues 153–220 (GTLLPRLPSE…RKEDTYVHFN (68 aa)) are axin-binding. A C2 Aida-type domain is found at 156–303 (LPRLPSEPGM…LYLHLLQTLL (148 aa)).

It belongs to the AIDA family.

Functionally, acts as a ventralizing factor during embryogenesis. Inhibits axin-mediated JNK activation by binding axin and disrupting axin homodimerization. This in turn antagonizes a Wnt/beta-catenin-independent dorsalization pathway activated by axin/JNK-signaling. This is Axin interactor, dorsalization-associated protein A (aida-a) from Xenopus laevis (African clawed frog).